A 168-amino-acid polypeptide reads, in one-letter code: MAEAFRGEYNQKVDAKARVSIPAPFRRVIEAGDPKFSGGRSSFVLVYGGDRSYVECYTISEMERIEERIRSLPMGTPKRRYLERNMITLALNMELDEDGRIVLPPKGREKLGISPDELKGGTEATFAGTLNKFQIWKADTYAAELAAEEEVLLPPGADMLSLLEETGL.

SpoVT-AbrB domains follow at residues 8 to 51 (EYNQ…GGDR) and 90 to 140 (ALNM…KADT).

The protein belongs to the MraZ family. Forms oligomers.

The protein resides in the cytoplasm. The protein localises to the nucleoid. This is Transcriptional regulator MraZ from Cereibacter sphaeroides (strain ATCC 17029 / ATH 2.4.9) (Rhodobacter sphaeroides).